The chain runs to 256 residues: Protein FixA (256 aa).

It belongs to the ETF beta-subunit/FixA family. In terms of assembly, heterodimer of FixA and FixB.

Its pathway is amine and polyamine metabolism; carnitine metabolism. Functionally, required for anaerobic carnitine reduction. May bring reductant to CaiA. The sequence is that of Protein FixA from Escherichia coli O139:H28 (strain E24377A / ETEC).